A 138-amino-acid polypeptide reads, in one-letter code: Basic phospholipase A2 homolog G6K49 (138 aa).

The N-terminal stretch at 1 to 16 (MRTLWIMAVLLLGVEG) is a signal peptide. Cystine bridges form between C42–C132, C44–C60, C59–C112, C65–C138, C66–C105, C73–C98, and C91–C103. The tract at residues 122–133 (KKHRVTVKFLCK) is important for membrane-damaging activities in eukaryotes and bacteria; heparin-binding.

Belongs to the phospholipase A2 family. Group II subfamily. K49 sub-subfamily. Homodimer; non-covalently linked. In terms of tissue distribution, expressed by the venom gland.

The protein resides in the secreted. Functionally, snake venom phospholipase A2 (PLA2) that lacks enzymatic activity. Displays myotoxic activities. A model of myotoxic mechanism has been proposed: an apo Lys49-PLA2 is activated by the entrance of a hydrophobic molecule (e.g. fatty acid) at the hydrophobic channel of the protein leading to a reorientation of a monomer. This reorientation causes a transition between 'inactive' to 'active' states, causing alignment of C-terminal and membrane-docking sites (MDoS) side-by-side and putting the membrane-disruption sites (MDiS) in the same plane, exposed to solvent and in a symmetric position for both monomers. The MDoS region stabilizes the toxin on membrane by the interaction of charged residues with phospholipid head groups. Subsequently, the MDiS region destabilizes the membrane with penetration of hydrophobic residues. This insertion causes a disorganization of the membrane, allowing an uncontrolled influx of ions (i.e. calcium and sodium), and eventually triggering irreversible intracellular alterations and cell death. This chain is Basic phospholipase A2 homolog G6K49, found in Calloselasma rhodostoma (Malayan pit viper).